Reading from the N-terminus, the 100-residue chain is Integration host factor subunit alpha (100 aa).

The tract at residues 53–72 is disordered; it reads FDLRDKRQRPGRNPKTGEEI.

Belongs to the bacterial histone-like protein family. In terms of assembly, heterodimer of an alpha and a beta chain.

Functionally, this protein is one of the two subunits of integration host factor, a specific DNA-binding protein that functions in genetic recombination as well as in transcriptional and translational control. The polypeptide is Integration host factor subunit alpha (Pseudomonas putida (strain ATCC 700007 / DSM 6899 / JCM 31910 / BCRC 17059 / LMG 24140 / F1)).